The primary structure comprises 266 residues: Isopentenyl phosphate kinase (266 aa).

ATP is bound at residue 5-9 (KLGGS). Ala-47 contributes to the substrate binding site. Residue Gly-48 participates in ATP binding. Substrate contacts are provided by His-52 and Gly-157. ATP contacts are provided by residues Asp-178, 183-188 (YTRNPK), Gly-219, and Lys-223.

It belongs to the isopentenyl phosphate kinase family. As to quaternary structure, homodimer.

The catalysed reaction is isopentenyl phosphate + ATP = isopentenyl diphosphate + ADP. Its function is as follows. Catalyzes the formation of isopentenyl diphosphate (IPP), the building block of all isoprenoids. Has lower activity with dimethylallyl phosphate (DMAP) and isopentenyl thiolophosphate (ISP). Has low activity with 1-butyl phosphate (BP) and 3-buten-1-yl phosphate (BEP). Has no significant activity with geranyl phosphate (in vitro). This chain is Isopentenyl phosphate kinase, found in Methanothermobacter thermautotrophicus (strain ATCC 29096 / DSM 1053 / JCM 10044 / NBRC 100330 / Delta H) (Methanobacterium thermoautotrophicum).